The primary structure comprises 235 residues: 1-(5-phosphoribosyl)-5-[(5-phosphoribosylamino)methylideneamino] imidazole-4-carboxamide isomerase (235 aa).

The Proton acceptor role is filled by Asp8. Asp129 acts as the Proton donor in catalysis.

It belongs to the HisA/HisF family.

The protein resides in the cytoplasm. The catalysed reaction is 1-(5-phospho-beta-D-ribosyl)-5-[(5-phospho-beta-D-ribosylamino)methylideneamino]imidazole-4-carboxamide = 5-[(5-phospho-1-deoxy-D-ribulos-1-ylimino)methylamino]-1-(5-phospho-beta-D-ribosyl)imidazole-4-carboxamide. Its pathway is amino-acid biosynthesis; L-histidine biosynthesis; L-histidine from 5-phospho-alpha-D-ribose 1-diphosphate: step 4/9. In Thermoanaerobacter sp. (strain X514), this protein is 1-(5-phosphoribosyl)-5-[(5-phosphoribosylamino)methylideneamino] imidazole-4-carboxamide isomerase.